The primary structure comprises 396 residues: MAKAKFERTKPHCNIGTIGHVDHGKTSLTAAITKVLAETGGATFTAYDQIDKAPEEKARGITISTAHVEYETQNRHYAHVDCPGHADYVKNMITGAAQMDGAILVVSAADGPMPQTREHILLARQVGVPALVVFLNKCDMVDDPELLELVEMEVRELLSKYDFPGDDIPIVKGSALAALENSDAKLGHDAILELMRQVDAYIPQPERPIDQPFLMPVEDVFSISGRGTVVTGRVERGILKVGDEIEIVGIRDTQKTTCTGVEMFRKLLDQGQAGDNIGALLRGTKREDVERGQVLCKPGSVKPHTKFKAEAYILTKEEGGRHTPFFTNYRPQFYFRTTDVTGVVHLPEGTEMVMPGDNIAMEVHLIVPIAMEEKLRFAIREGGRTVGAGVVAAIIE.

The tr-type G domain occupies 10 to 206 (KPHCNIGTIG…QVDAYIPQPE (197 aa)). The tract at residues 19-26 (GHVDHGKT) is G1. 19–26 (GHVDHGKT) serves as a coordination point for GTP. Residue T26 participates in Mg(2+) binding. The G2 stretch occupies residues 60-64 (GITIS). Residues 81-84 (DCPG) are G3. Residues 81 to 85 (DCPGH) and 136 to 139 (NKCD) each bind GTP. The tract at residues 136–139 (NKCD) is G4. The interval 174–176 (SAL) is G5.

It belongs to the TRAFAC class translation factor GTPase superfamily. Classic translation factor GTPase family. EF-Tu/EF-1A subfamily. Monomer.

It localises to the cytoplasm. The enzyme catalyses GTP + H2O = GDP + phosphate + H(+). Functionally, GTP hydrolase that promotes the GTP-dependent binding of aminoacyl-tRNA to the A-site of ribosomes during protein biosynthesis. The sequence is that of Elongation factor Tu from Rhodopseudomonas palustris (strain ATCC BAA-98 / CGA009).